Reading from the N-terminus, the 57-residue chain is Large ribosomal subunit protein bL32 (57 aa).

A compositionally biased stretch (basic residues) spans 1–16 (MAVQKSRKTRSKRGMR). Residues 1–45 (MAVQKSRKTRSKRGMRRSHDALTAPAQLSVDATSGETHRRHHMTA) form a disordered region.

It belongs to the bacterial ribosomal protein bL32 family.

This chain is Large ribosomal subunit protein bL32, found in Psychromonas ingrahamii (strain DSM 17664 / CCUG 51855 / 37).